Reading from the N-terminus, the 283-residue chain is Phospholipase C (283 aa).

Residues 1 to 24 (MKKKVLALGAAITLVAPLQSVAFA) form the signal peptide. Residues 25 to 38 (HENDGGQRFGVIPR) constitute a propeptide that is removed on maturation. Positions 39, 52, 93, 107, 156, 160, 166, 180, and 184 each coordinate Zn(2+). The 245-residue stretch at 39–283 (WSAEDKHKEG…QLWFDTYGNR (245 aa)) folds into the Zn-dependent PLC domain.

The protein belongs to the bacterial zinc-metallophospholipase C family. Monomer. Zn(2+) is required as a cofactor.

It carries out the reaction a 1,2-diacyl-sn-glycero-3-phosphocholine + H2O = phosphocholine + a 1,2-diacyl-sn-glycerol + H(+). In terms of biological role, required, with sphingomyelinase, to effect target cell lysis (hemolysis). The protein is Phospholipase C (cerA) of Bacillus cereus.